The primary structure comprises 687 residues: Adhesion G-protein coupled receptor G1 (687 aa).

Positions methionine 1 to serine 25 are cleaved as a signal peptide. Residue glycine 26 to arginine 33 coordinates heparin. The Extracellular segment spans residues glycine 26–tyrosine 402. Intrachain disulfides connect cysteine 35–cysteine 91 and cysteine 121–cysteine 177. Residues asparagine 39, asparagine 148, and asparagine 171 are each glycosylated (N-linked (GlcNAc...) asparagine). Leucine 190–proline 200 serves as a coordination point for heparin. The GAIN-B domain occupies aspartate 224 to valine 395. Asparagine 234, asparagine 303, asparagine 324, and asparagine 341 each carry an N-linked (GlcNAc...) asparagine glycan. Cystine bridges form between cysteine 346–cysteine 377 and cysteine 366–cysteine 379. A GPS region spans residues cysteine 346–valine 395. A stachel region spans residues tyrosine 384 to alanine 397. Residues leucine 403–alanine 423 form a helical membrane-spanning segment. Topologically, residues alanine 424–asparagine 442 are cytoplasmic. A helical transmembrane segment spans residues leucine 443 to threonine 463. The Extracellular portion of the chain corresponds to glycine 464–threonine 471. The helical transmembrane segment at serine 472–tyrosine 492 threads the bilayer. The Cytoplasmic portion of the chain corresponds to asparagine 493–lysine 512. The chain crosses the membrane as a helical span at residues leucine 513–valine 533. Topologically, residues asparagine 534–glycine 570 are extracellular. The helical transmembrane segment at leucine 571–leucine 591 threads the bilayer. Over arginine 592 to valine 603 the chain is Cytoplasmic. Residues leucine 604–phenylalanine 624 traverse the membrane as a helical segment. The Extracellular segment spans residues alanine 625–glutamine 630. Residues leucine 631–tryptophan 651 traverse the membrane as a helical segment. The Cytoplasmic portion of the chain corresponds to tyrosine 652 to isoleucine 687. The tract at residues serine 664–isoleucine 687 is disordered. Positions serine 678–isoleucine 687 are enriched in low complexity.

Belongs to the G-protein coupled receptor 2 family. LN-TM7 subfamily. Heterodimer of 2 chains generated by proteolytic processing; the large extracellular N-terminal fragment (ADGRG1 NT) and the membrane-bound C-terminal fragment (ADGRG1-CT) predominantly remain associated and non-covalently linked. ADGRG1 NT self-associates in a trans-trans manner; the homophilic interaction enhances receptor signaling. Interacts with TGM2. Interacts with heparin; leading to the reduction of ADGRG1 shedding. Interacts with COL3A1. Part of a GPCR-tetraspanin complex at least consisting of ADGRG1, CD81, eventually CD9, and GNA11 in which CD81 is enhancing the association of ADGRG1 with GNA11. In terms of processing, autoproteolytically cleaved into 2 fragments; the large extracellular N-terminal fragment and the membroune-bound C-terminal fragment predominantly remain associated and non-covalently linked. N-glycosylated. The secreted ADGRG1 N-terminal fragment is heavily glycosylated. Post-translationally, ubiquitinated. Undergoes polyubiquitination upon activation. As to expression, expressed in neural progenitor cells in fetal forbrain. Expressed in migrating neurons. Expressed in radial glial endfeet (at protein level). Expressed in peritubular myoid cells, Sertoli cells, and germ cells of the testis.

The protein resides in the cell membrane. It localises to the secreted. Its subcellular location is the membrane raft. Forms a heterodimer of 2 chains generated by proteolytic processing that remain associated through non-covalent interactions mediated by the GAIN-B domain. In the inactivated receptor, the Stachel sequence (also named stalk) is embedded in the GAIN-B domain, where it adopts a beta-strand conformation. On activation, the Stachel moves into the 7 transmembrane region and adopts a twisted hook-shaped configuration that forms contacts within the receptor, leading to coupling of a G-alpha protein, which activates signaling. The cleaved GAIN-B and N-terminal domains can then dissociate from the rest of the receptor. Activated by the small-molecule agonist, 3-alpha-acetoxydihydrodeoxygedunin (3-alpha-DOG). In terms of biological role, adhesion G-protein coupled receptor (aGPCR) for steroid hormone 17alpha-hydroxypregnenolone (17-OH), which is involved in cell adhesion and cell-cell interactions. Ligand binding causes a conformation change that triggers signaling via guanine nucleotide-binding proteins (G proteins) and modulates the activity of downstream effectors, such as RhoA pathway. ADGRG1 is coupled to G(12) and/or G(13) G proteins (GNA12 and GNA13, respectively) and mediates the activation Rho small GTPases. Acts as a potent suppressor of ferroptosis: binding to 17-OH-binding initiates signaling that down-regulates CD36 and alleviates ferroptosis-induced liver injury. Ligand-binding also induces cell adhesion activity via association with proteins such as collagen III/COL3A1 and TGM2. Mediates cell matrix adhesion in developing neurons and hematopoietic stem cells. Involved in cortical development, specifically in maintenance of the pial basement membrane integrity and in cortical lamination: association with COL3A1 in the developing brain inhibits neuronal migration via activation of the RhoA pathway. Together with TGM2, acts as a regulator of myelination and myelin repair in oligodendrocyte precursor cells. Acts as a hemostatic sensor of shear force: G protein-coupled receptor signaling is activated in response to shear force in platelets, promoting G(13) G protein signaling, and platelet shape change and aggregation in a COL3A1-dependent manner. Acts as an inhibitor of VEGFA production thereby inhibiting angiogenesis through a signaling pathway mediated by PRKCA. Plays a role in the maintenance of hematopoietic stem cells in bone marrow niche. Plays an essential role in testis development. Its function is as follows. Adhesion G-protein coupled receptor (aGPCR) for phosphatidylserine, which is involved in microglia-mediated synapse pruning during development. Required to maintain appropriate synaptic numbers in several brain regions in a time- and circuit-dependent fashion: phosphatidylserine-binding acts as a 'eat-me' signal for apoptotic cells, leading to microglial engulfment of phosphatidylserine-positive synapses. The chain is Adhesion G-protein coupled receptor G1 from Mus musculus (Mouse).